Here is a 143-residue protein sequence, read N- to C-terminus: Putative phosphotransferase IIA component SgcA (143 aa).

A PTS EIIA type-2 domain is found at 1–143 (MINDIKWVQA…DDALFALVSG (143 aa)). Residue histidine 63 is the Tele-phosphohistidine intermediate of the active site.

Its subcellular location is the cytoplasm. In terms of biological role, the phosphoenolpyruvate-dependent sugar phosphotransferase system (sugar PTS), a major carbohydrate active -transport system, catalyzes the phosphorylation of incoming sugar substrates concomitantly with their translocation across the cell membrane. In Escherichia coli (strain K12), this protein is Putative phosphotransferase IIA component SgcA (sgcA).